A 219-amino-acid chain; its full sequence is RNA-free ribonuclease P (219 aa).

Belongs to the HARP family.

The enzyme catalyses Endonucleolytic cleavage of RNA, removing 5'-extranucleotides from tRNA precursor.. RNA-free RNase P that catalyzes the removal of the 5'-leader sequence from pre-tRNA to produce the mature 5'-terminus. The protein is RNA-free ribonuclease P of Staphylothermus marinus (strain ATCC 43588 / DSM 3639 / JCM 9404 / F1).